The sequence spans 735 residues: Photosystem I P700 chlorophyll a apoprotein A2 (735 aa).

8 helical membrane passes run 47–70, 136–159, 176–200, 274–292, 331–354, 370–396, 418–440, and 518–536; these read IFAS…FHVA, LFTG…LHLQ, LNHH…HVAI, MAHH…GHMY, LHFQ…QHIY, AALY…IFFI, AIIS…LYVH, and FLVH…LILV. The [4Fe-4S] cluster site is built by Cys560 and Cys569. 2 helical membrane-spanning segments follow: residues 576–597 and 644–666; these read AFYL…YFHW and LSVW…MFLI. His655, Met663, and Tyr671 together coordinate chlorophyll a. Phylloquinone is bound at residue Trp672. The chain crosses the membrane as a helical span at residues 708-728; sequence LVGLVHFSVGYIFTYAAFLIA.

The protein belongs to the PsaA/PsaB family. In terms of assembly, the PsaA/B heterodimer binds the P700 chlorophyll special pair and subsequent electron acceptors. PSI consists of a core antenna complex that captures photons, and an electron transfer chain that converts photonic excitation into a charge separation. The eukaryotic PSI reaction center is composed of at least 11 subunits. Requires P700 is a chlorophyll a/chlorophyll a' dimer, A0 is one or more chlorophyll a, A1 is one or both phylloquinones and FX is a shared 4Fe-4S iron-sulfur center. as cofactor.

It localises to the plastid. Its subcellular location is the chloroplast thylakoid membrane. The catalysed reaction is reduced [plastocyanin] + hnu + oxidized [2Fe-2S]-[ferredoxin] = oxidized [plastocyanin] + reduced [2Fe-2S]-[ferredoxin]. PsaA and PsaB bind P700, the primary electron donor of photosystem I (PSI), as well as the electron acceptors A0, A1 and FX. PSI is a plastocyanin/cytochrome c6-ferredoxin oxidoreductase, converting photonic excitation into a charge separation, which transfers an electron from the donor P700 chlorophyll pair to the spectroscopically characterized acceptors A0, A1, FX, FA and FB in turn. Oxidized P700 is reduced on the lumenal side of the thylakoid membrane by plastocyanin or cytochrome c6. The sequence is that of Photosystem I P700 chlorophyll a apoprotein A2 from Chlamydomonas moewusii (Chlamydomonas eugametos).